Here is a 429-residue protein sequence, read N- to C-terminus: 3-phosphoshikimate 1-carboxyvinyltransferase (429 aa).

3-phosphoshikimate is bound by residues Lys-11, Ser-12, and Arg-16. Lys-11 serves as a coordination point for phosphoenolpyruvate. The phosphoenolpyruvate site is built by Gly-82 and Arg-110. Positions 155, 157, 302, and 329 each coordinate 3-phosphoshikimate. Gln-157 is a binding site for phosphoenolpyruvate. The active-site Proton acceptor is Asp-302. Positions 333 and 385 each coordinate phosphoenolpyruvate.

This sequence belongs to the EPSP synthase family. As to quaternary structure, monomer.

It localises to the cytoplasm. It catalyses the reaction 3-phosphoshikimate + phosphoenolpyruvate = 5-O-(1-carboxyvinyl)-3-phosphoshikimate + phosphate. It participates in metabolic intermediate biosynthesis; chorismate biosynthesis; chorismate from D-erythrose 4-phosphate and phosphoenolpyruvate: step 6/7. In terms of biological role, catalyzes the transfer of the enolpyruvyl moiety of phosphoenolpyruvate (PEP) to the 5-hydroxyl of shikimate-3-phosphate (S3P) to produce enolpyruvyl shikimate-3-phosphate and inorganic phosphate. The polypeptide is 3-phosphoshikimate 1-carboxyvinyltransferase (Helicobacter pylori (strain P12)).